Consider the following 517-residue polypeptide: Crotonobetaine/carnitine--CoA ligase (517 aa).

It belongs to the ATP-dependent AMP-binding enzyme family.

It carries out the reaction 4-(trimethylamino)butanoate + ATP + CoA = 4-(trimethylamino)butanoyl-CoA + AMP + diphosphate. The catalysed reaction is crotonobetaine + ATP + CoA = crotonobetainyl-CoA + AMP + diphosphate. It catalyses the reaction (R)-carnitine + ATP + CoA = (R)-carnitinyl-CoA + AMP + diphosphate. The protein operates within amine and polyamine metabolism; carnitine metabolism. Catalyzes the transfer of CoA to carnitine, generating the initial carnitinyl-CoA needed for the CaiB reaction cycle. Also has activity toward crotonobetaine and gamma-butyrobetaine. This chain is Crotonobetaine/carnitine--CoA ligase, found in Shigella dysenteriae serotype 1 (strain Sd197).